We begin with the raw amino-acid sequence, 347 residues long: NADH-ubiquinone oxidoreductase chain 2 (347 aa).

10 consecutive transmembrane segments (helical) span residues 4 to 21 (LILS…LIVM), 26 to 45 (WLMV…PVLM), 59 to 79 (YFLT…INLI), 96 to 116 (IIMT…FWVP), 122 to 142 (IQLS…MSIL), 148 to 168 (AINM…GGWG), 201 to 221 (ALLN…TFML), 242 to 262 (TTIL…GFLP), 274 to 294 (DSII…YFYM), and 326 to 346 (LPPL…LMLL).

It belongs to the complex I subunit 2 family. In terms of assembly, core subunit of respiratory chain NADH dehydrogenase (Complex I) which is composed of 45 different subunits. Interacts with TMEM242.

Its subcellular location is the mitochondrion inner membrane. It catalyses the reaction a ubiquinone + NADH + 5 H(+)(in) = a ubiquinol + NAD(+) + 4 H(+)(out). Its function is as follows. Core subunit of the mitochondrial membrane respiratory chain NADH dehydrogenase (Complex I) which catalyzes electron transfer from NADH through the respiratory chain, using ubiquinone as an electron acceptor. Essential for the catalytic activity and assembly of complex I. This Syconycteris australis (Southern blossom bat) protein is NADH-ubiquinone oxidoreductase chain 2.